A 505-amino-acid polypeptide reads, in one-letter code: 2,3-bisphosphoglycerate-independent phosphoglycerate mutase (505 aa).

Residues aspartate 12 and serine 62 each coordinate Mn(2+). The active-site Phosphoserine intermediate is serine 62. Substrate-binding positions include histidine 123, arginine 153–aspartate 154, arginine 185, arginine 191, arginine 257–arginine 260, and lysine 330. Residues aspartate 397, histidine 401, aspartate 438, histidine 439, and histidine 456 each coordinate Mn(2+).

The protein belongs to the BPG-independent phosphoglycerate mutase family. As to quaternary structure, monomer. The cofactor is Mn(2+).

It carries out the reaction (2R)-2-phosphoglycerate = (2R)-3-phosphoglycerate. The protein operates within carbohydrate degradation; glycolysis; pyruvate from D-glyceraldehyde 3-phosphate: step 3/5. Functionally, catalyzes the interconversion of 2-phosphoglycerate and 3-phosphoglycerate. In Staphylococcus aureus (strain Mu50 / ATCC 700699), this protein is 2,3-bisphosphoglycerate-independent phosphoglycerate mutase.